The sequence spans 92 residues: uncharacterized protein (92 aa).

Transmembrane regions (helical) follow at residues 1–21 (MNIY…LVGL), 30–50 (ANVL…IVVI), and 62–82 (IALA…KVIG).

This sequence to M.thermoautotrophicum MTH1250.

The protein localises to the cell membrane. This is an uncharacterized protein from Methanocaldococcus jannaschii (strain ATCC 43067 / DSM 2661 / JAL-1 / JCM 10045 / NBRC 100440) (Methanococcus jannaschii).